Consider the following 559-residue polypeptide: Nuclear speckle splicing regulatory protein 1 (559 aa).

The disordered stretch occupies residues 22 to 57 (VLQKPSVFGNDSDDDDDETSVSESLQREAAKKQAMK). Phosphoserine occurs at positions 27 and 33. Residues 32–41 (DSDDDDDETS) are compositionally biased toward acidic residues. Positions 105-179 (IHNLLKAVEI…EARLDVTKQR (75 aa)) form a coiled coil. Residues 107 to 171 (NLLKAVEIRK…RERRAAALEA (65 aa)) are necessary for alternative splicing activity. Residues 195–534 (EEEVPTCSFR…AKRSNEETVT (340 aa)) form a disordered region. Over residues 204 to 219 (REARSEIKEEKSKGYS) the composition is skewed to basic and acidic residues. A Glycyl lysine isopeptide (Lys-Gly) (interchain with G-Cter in SUMO2) cross-link involves residue Lys-211. Phosphoserine is present on residues Ser-249, Ser-255, and Ser-256. The span at 251-274 (FDAKSSENDEMEGDKGNCRREKGT) shows a compositional bias: basic and acidic residues. Thr-276 is modified (phosphothreonine). Residue Lys-282 forms a Glycyl lysine isopeptide (Lys-Gly) (interchain with G-Cter in SUMO2) linkage. Basic and acidic residues-rich tracts occupy residues 314 to 343 (EKREDEHQERPAREQDSYHTDRDSRKEKRD), 351 to 488 (SHRD…RNPE), and 502 to 521 (RITEECQETGKEQERLHETV). Residues 379–428 (KREKDREKYPSREQERHRQRNNYDRHNEKGCEKEEKSKEKEEHVKARKER) adopt a coiled-coil conformation. At Ser-458 the chain carries Phosphoserine.

Belongs to the NSRP1 family. Interacts (via C-terminus) with SRSF1. Interacts (via C-terminus) with SRSF2.

The protein localises to the nucleus. It is found in the nucleus speckle. Functionally, RNA-binding protein that mediates pre-mRNA alternative splicing regulation. This Bos taurus (Bovine) protein is Nuclear speckle splicing regulatory protein 1 (NSRP1).